A 479-amino-acid polypeptide reads, in one-letter code: Dihydrolipoyl dehydrogenase, mitochondrial (479 aa).

A mitochondrion-targeting transit peptide spans 1–19; that stretch reads FNRXSPGLQGVSSVPLRTY. Lysine 50 bears the N6-acetyllysine; alternate mark. Position 50 is an N6-succinyllysine; alternate (lysine 50). Residues 55–64 and lysine 73 each bind FAD; that span reads EKNETLGGTC. A disulfide bridge links cysteine 64 with cysteine 69. N6-acetyllysine; alternate occurs at positions 88, 106, 116, and 127. An N6-succinyllysine; alternate mark is found at lysine 88, lysine 106, lysine 116, and lysine 127. Glycine 138 is a binding site for FAD. Lysine 143 and lysine 150 each carry N6-succinyllysine. Residue 167-169 participates in FAD binding; the sequence is TGS. NAD(+)-binding positions include 204-211 and glutamate 227; that span reads GAGVIGVE. Residues lysine 257 and lysine 261 each carry the N6-succinyllysine modification. Residue valine 262 participates in NAD(+) binding. Serine 269 carries the post-translational modification Phosphoserine. Glycine 298 is a binding site for NAD(+). An N6-acetyllysine modification is found at lysine 330. FAD contacts are provided by residues aspartate 339 and 345–348; that span reads MLAH. N6-acetyllysine; alternate is present on lysine 394. An N6-succinyllysine; alternate modification is found at lysine 394. Lysine 401 and lysine 404 each carry N6-acetyllysine. Lysine 414 is subject to N6-succinyllysine. The active-site Proton acceptor is histidine 471.

This sequence belongs to the class-I pyridine nucleotide-disulfide oxidoreductase family. As to quaternary structure, homodimer. Part of the multimeric pyruvate dehydrogenase complex that contains multiple copies of pyruvate dehydrogenase (subunits PDHA (PDHA1 or PDHA2) and PDHB, E1), dihydrolipoamide acetyltransferase (DLAT, E2) and lipoamide dehydrogenase (DLD, E3). These subunits are bound to an inner core composed of about 48 DLAT and 12 PDHX molecules (by non covalent bonds). The 2-oxoglutarate dehydrogenase complex is composed of OGDH (2-oxoglutarate dehydrogenase; E1), DLST (dihydrolipoamide succinyltransferase; E2) and DLD (dihydrolipoamide dehydrogenase; E3). It contains multiple copies of the three enzymatic components (E1, E2 and E3). In the nucleus, the 2-oxoglutarate dehydrogenase complex associates with KAT2A. Interacts with PDHX. It depends on FAD as a cofactor. Post-translationally, tyrosine phosphorylated. As to expression, expressed in testis (at protein level).

Its subcellular location is the mitochondrion matrix. It is found in the nucleus. The protein localises to the cell projection. The protein resides in the cilium. It localises to the flagellum. Its subcellular location is the cytoplasmic vesicle. It is found in the secretory vesicle. The protein localises to the acrosome. The catalysed reaction is N(6)-[(R)-dihydrolipoyl]-L-lysyl-[protein] + NAD(+) = N(6)-[(R)-lipoyl]-L-lysyl-[protein] + NADH + H(+). Lipoamide dehydrogenase is a component of the glycine cleavage system as well as an E3 component of three alpha-ketoacid dehydrogenase complexes (pyruvate-, alpha-ketoglutarate-, and branched-chain amino acid-dehydrogenase complex). The 2-oxoglutarate dehydrogenase complex is mainly active in the mitochondrion. A fraction of the 2-oxoglutarate dehydrogenase complex also localizes in the nucleus and is required for lysine succinylation of histones: associates with KAT2A on chromatin and provides succinyl-CoA to histone succinyltransferase KAT2A. In monomeric form may have additional moonlighting function as serine protease. Involved in the hyperactivation of spermatazoa during capacitation and in the spermatazoal acrosome reaction. This Mesocricetus auratus (Golden hamster) protein is Dihydrolipoyl dehydrogenase, mitochondrial (DLD).